We begin with the raw amino-acid sequence, 240 residues long: Small ribosomal subunit protein uS3 (240 aa).

Positions 39–109 (IRQYVEKNLS…QIRINVVEVA (71 aa)) constitute a KH type-2 domain. The disordered stretch occupies residues 214 to 240 (EEQAPAQPATTPKRQRRRQQFEDRSNE).

Belongs to the universal ribosomal protein uS3 family. As to quaternary structure, part of the 30S ribosomal subunit. Forms a tight complex with proteins S10 and S14.

Binds the lower part of the 30S subunit head. Binds mRNA in the 70S ribosome, positioning it for translation. The sequence is that of Small ribosomal subunit protein uS3 from Gloeothece citriformis (strain PCC 7424) (Cyanothece sp. (strain PCC 7424)).